Here is a 290-residue protein sequence, read N- to C-terminus: Protease HtpX (290 aa).

The next 2 membrane-spanning stretches (helical) occupy residues 6-26 and 36-56; these read LFLV…NILF and ISGL…ISLL. His-143 contributes to the Zn(2+) binding site. The active site involves Glu-144. His-147 is a binding site for Zn(2+). The next 2 helical transmembrane spans lie at 158-178 and 200-220; these read LIQG…AGVI and ITVF…VMWF. Residue Glu-225 coordinates Zn(2+).

It belongs to the peptidase M48B family. Zn(2+) serves as cofactor.

It is found in the cell inner membrane. This is Protease HtpX from Aeromonas salmonicida (strain A449).